The sequence spans 314 residues: MIKVVFMGTPDFSVPVLRRLIEDGYDVIGVVTQPDRPVGRKKVLTPTPVKVEAEKHDIPVLQPLRIREKDEYEKVLALEPDLIVTAAFGQIVPNEILEAPKYGCINVHASLLPELRGGAPIHYAIMEGKEKTGITIMYMVEKLDAGDILTQVEVEIEERETTGSLFDKLSEAGAHLLSKTVPLLIQGKLEPIKQNEEEVTFAYNIKREQEKIDWTKTGEEVYNHIRGLNPWPVAYTTLAGQVVKVWWGEKVPVTKSAEAGTIVAIEEDGFVVATGNETGVKITELQPSGKKRMSCSQFLRGTKPEIGTKLGENA.

110-113 (SLLP) contacts (6S)-5,6,7,8-tetrahydrofolate.

This sequence belongs to the Fmt family.

The enzyme catalyses L-methionyl-tRNA(fMet) + (6R)-10-formyltetrahydrofolate = N-formyl-L-methionyl-tRNA(fMet) + (6S)-5,6,7,8-tetrahydrofolate + H(+). In terms of biological role, attaches a formyl group to the free amino group of methionyl-tRNA(fMet). The formyl group appears to play a dual role in the initiator identity of N-formylmethionyl-tRNA by promoting its recognition by IF2 and preventing the misappropriation of this tRNA by the elongation apparatus. This Bacillus thuringiensis subsp. konkukian (strain 97-27) protein is Methionyl-tRNA formyltransferase.